The following is a 440-amino-acid chain: Ribosomal protein uS12 methylthiotransferase RimO (440 aa).

One can recognise an MTTase N-terminal domain in the interval Leu-8 to Asn-125. [4Fe-4S] cluster-binding residues include Cys-17, Cys-52, Cys-87, Cys-152, Cys-156, and Cys-159. The Radical SAM core domain occupies Thr-138–Lys-368. The TRAM domain maps to Lys-371 to Ser-439.

Belongs to the methylthiotransferase family. RimO subfamily. Requires [4Fe-4S] cluster as cofactor.

The protein localises to the cytoplasm. The enzyme catalyses L-aspartate(89)-[ribosomal protein uS12]-hydrogen + (sulfur carrier)-SH + AH2 + 2 S-adenosyl-L-methionine = 3-methylsulfanyl-L-aspartate(89)-[ribosomal protein uS12]-hydrogen + (sulfur carrier)-H + 5'-deoxyadenosine + L-methionine + A + S-adenosyl-L-homocysteine + 2 H(+). Its function is as follows. Catalyzes the methylthiolation of an aspartic acid residue of ribosomal protein uS12. The polypeptide is Ribosomal protein uS12 methylthiotransferase RimO (Lawsonia intracellularis (strain PHE/MN1-00)).